Reading from the N-terminus, the 662-residue chain is F-box/WD repeat-containing protein pof10 (662 aa).

Residues 1–16 (MKSEPTSLDFTSSNLR) show a composition bias toward polar residues. Residues 1–27 (MKSEPTSLDFTSSNLRRMNRDHSSNNT) form a disordered region. Residues 28 to 74 (NRTVLNLPKEILIIIFSFLDPRSLLSAQCTCKYWKKLLSDDLSWRTA) form the F-box domain. WD repeat units lie at residues 215–260 (SHAD…SLQS), 263–302 (FRSS…GYAR), and 429–468 (TAYS…FLKK). Residues 581-600 (SEEEIIAYVTMLSQEEEAKR) enclose the UIM 1 domain. A disordered region spans residues 617 to 645 (ENDEQATSSLNALSSNHEPPQEQANVAEL). Residues 621–640 (QATSSLNALSSNHEPPQEQA) show a composition bias toward polar residues. The 17-residue stretch at 646-662 (NEQEQIELAMRLSLMEM) folds into the UIM 2 domain.

Part of a SCF (SKP1-cullin-F-box) protein ligase complex. Interacts with skp1.

The protein resides in the cytoplasm. Its function is as follows. Probably recognizes and binds to some phosphorylated proteins and promotes their ubiquitination and degradation. The polypeptide is F-box/WD repeat-containing protein pof10 (pof10) (Schizosaccharomyces pombe (strain 972 / ATCC 24843) (Fission yeast)).